Here is a 214-residue protein sequence, read N- to C-terminus: Probable transaldolase (214 aa).

Catalysis depends on Lys83, which acts as the Schiff-base intermediate with substrate.

It belongs to the transaldolase family. Type 3B subfamily.

The protein resides in the cytoplasm. It catalyses the reaction D-sedoheptulose 7-phosphate + D-glyceraldehyde 3-phosphate = D-erythrose 4-phosphate + beta-D-fructose 6-phosphate. Its pathway is carbohydrate degradation; pentose phosphate pathway; D-glyceraldehyde 3-phosphate and beta-D-fructose 6-phosphate from D-ribose 5-phosphate and D-xylulose 5-phosphate (non-oxidative stage): step 2/3. In terms of biological role, transaldolase is important for the balance of metabolites in the pentose-phosphate pathway. The sequence is that of Probable transaldolase from Maridesulfovibrio salexigens (strain ATCC 14822 / DSM 2638 / NCIMB 8403 / VKM B-1763) (Desulfovibrio salexigens).